We begin with the raw amino-acid sequence, 462 residues long: GTPase Der (462 aa).

EngA-type G domains follow at residues 3–170 (ITIA…TSQK) and 201–372 (IKIA…FNSI). GTP-binding positions include 9–16 (GRTNVGKS), 57–61 (DTPGI), 122–125 (NKIE), 207–214 (GKPNVGKS), 254–258 (DTAGI), and 319–322 (NKND). Positions 373–457 (KKIHTSKITE…SIVLYFKSSK (85 aa)) constitute a KH-like domain.

The protein belongs to the TRAFAC class TrmE-Era-EngA-EngB-Septin-like GTPase superfamily. EngA (Der) GTPase family. Associates with the 50S ribosomal subunit.

Functionally, GTPase that plays an essential role in the late steps of ribosome biogenesis. This chain is GTPase Der, found in Buchnera aphidicola subsp. Baizongia pistaciae (strain Bp).